The sequence spans 207 residues: Large ribosomal subunit protein uL4 (207 aa).

Residues 62–85 (KKPFKQKGTGQARQGCRRAPQYPG) are disordered.

Belongs to the universal ribosomal protein uL4 family. Part of the 50S ribosomal subunit.

Functionally, one of the primary rRNA binding proteins, this protein initially binds near the 5'-end of the 23S rRNA. It is important during the early stages of 50S assembly. It makes multiple contacts with different domains of the 23S rRNA in the assembled 50S subunit and ribosome. Forms part of the polypeptide exit tunnel. The polypeptide is Large ribosomal subunit protein uL4 (Geobacter sp. (strain M21)).